A 160-amino-acid polypeptide reads, in one-letter code: Thialysine N-epsilon-acetyltransferase (160 aa).

Positions 4 to 159 (FEIVTVTPDH…DGAAINKFAD (156 aa)) constitute an N-acetyltransferase domain. Acetyl-CoA is bound by residues 84-86 (LYI), 92-97 (RMGLAR), 123-126 (NKNA), and 130-133 (YDTV).

It belongs to the acetyltransferase family. Homodimer.

It carries out the reaction S-(2-aminoethyl)-L-cysteine + acetyl-CoA = S-(2-acetamidoethyl)-L-cysteine + CoA + H(+). It catalyses the reaction O-(2-aminoethyl)-L-serine + acetyl-CoA = O-(2-acetamidoethyl)-L-serine + CoA + H(+). The enzyme catalyses S-(2-aminoethyl)-homocysteine + acetyl-CoA = S-(2-acetamidoethyl)-homocysteine + CoA + H(+). Functionally, catalyzes the N-acetylation of the amino acid thialysine (S-(2-aminoethyl)-L-cysteine), a L-lysine analog with the 4-methylene group substituted with a sulfur. Substrate specificity: thialysine &gt; O-(2-aminoethyl)-L-serine &gt; S-(2-aminoethyl)-D,L-homocysteine. Does not act on polyamines, such as spermidine and spermine, nor on diamines putrescine and cadaverine. This chain is Thialysine N-epsilon-acetyltransferase, found in Caenorhabditis elegans.